Consider the following 190-residue polypeptide: Xanthine phosphoribosyltransferase (190 aa).

Xanthine is bound by residues Leu20 and Asn27. Position 128–132 (128–132) interacts with 5-phospho-alpha-D-ribose 1-diphosphate; the sequence is ANGEA. Lys156 provides a ligand contact to xanthine.

It belongs to the purine/pyrimidine phosphoribosyltransferase family. Xpt subfamily. Homodimer.

The protein resides in the cytoplasm. The catalysed reaction is XMP + diphosphate = xanthine + 5-phospho-alpha-D-ribose 1-diphosphate. The protein operates within purine metabolism; XMP biosynthesis via salvage pathway; XMP from xanthine: step 1/1. Converts the preformed base xanthine, a product of nucleic acid breakdown, to xanthosine 5'-monophosphate (XMP), so it can be reused for RNA or DNA synthesis. This Clostridium botulinum (strain Eklund 17B / Type B) protein is Xanthine phosphoribosyltransferase.